Reading from the N-terminus, the 443-residue chain is Elongation factor 1-alpha (443 aa).

The region spanning 5 to 228 (KTHINLVVIG…DTMQPPKRPY (224 aa)) is the tr-type G domain. The G1 stretch occupies residues 14–21 (GHVDSGKS). Residue 14 to 21 (GHVDSGKS) coordinates GTP. The segment at 70-74 (GITID) is G2. Residues 91 to 94 (DAPG) form a G3 region. GTP-binding positions include 91–95 (DAPGH) and 153–156 (NKMD). Positions 153–156 (NKMD) are G4. A G5 region spans residues 192–194 (SGF).

It belongs to the TRAFAC class translation factor GTPase superfamily. Classic translation factor GTPase family. EF-Tu/EF-1A subfamily.

The protein resides in the cytoplasm. In terms of biological role, this protein promotes the GTP-dependent binding of aminoacyl-tRNA to the A-site of ribosomes during protein biosynthesis. In Plasmodium falciparum (isolate K1 / Thailand), this protein is Elongation factor 1-alpha (MEF-1).